Consider the following 156-residue polypeptide: Ribosomal RNA large subunit methyltransferase H (156 aa).

S-adenosyl-L-methionine is bound by residues L73, G104, and 123-128; that span reads LSSLTL.

This sequence belongs to the RNA methyltransferase RlmH family. Homodimer.

Its subcellular location is the cytoplasm. The enzyme catalyses pseudouridine(1915) in 23S rRNA + S-adenosyl-L-methionine = N(3)-methylpseudouridine(1915) in 23S rRNA + S-adenosyl-L-homocysteine + H(+). Specifically methylates the pseudouridine at position 1915 (m3Psi1915) in 23S rRNA. In Neisseria meningitidis serogroup C (strain 053442), this protein is Ribosomal RNA large subunit methyltransferase H.